Here is a 466-residue protein sequence, read N- to C-terminus: Alpha-1A adrenergic receptor (466 aa).

The Extracellular segment spans residues 1–27 (MVFLSGNASDSSNCTQPPAPVNISKAI). 3 N-linked (GlcNAc...) asparagine glycosylation sites follow: asparagine 7, asparagine 13, and asparagine 22. The chain crosses the membrane as a helical span at residues 28-51 (LLGVILGGLILFGVLGNILVILSV). At 52-64 (ACHRHLHSVTHYY) the chain is on the cytoplasmic side. Residues 65–88 (IVNLAVADLLLTSTVLPFSAIFEV) traverse the membrane as a helical segment. The Extracellular portion of the chain corresponds to 89-99 (LGYWAFGRVFC). A disulfide bridge connects residues cysteine 99 and cysteine 176. The helical transmembrane segment at 100-122 (NIWAAVDVLCCTASIMGLCIISI) threads the bilayer. Residues 123-143 (DRYIGVSYPLRYPTIVTQRRG) are Cytoplasmic-facing. Residues 144–167 (LMALLCVWALSLVISIGPLFGWRQ) traverse the membrane as a helical segment. At 168–181 (PAPEDETICQINEE) the chain is on the extracellular side. The chain crosses the membrane as a helical span at residues 182-205 (PGYVLFSALGSFYLPLAIILVMYC). Residues 206 to 273 (RVYVVAKRES…FSREKKAAKT (68 aa)) are Cytoplasmic-facing. Serine 215 is subject to Phosphoserine; by PKA. The chain crosses the membrane as a helical span at residues 274 to 297 (LGIVVGCFVLCWLPFFLVMPIGSF). Residues 298 to 305 (FPDFKPSE) lie on the Extracellular side of the membrane. A helical transmembrane segment spans residues 306 to 329 (TVFKIVFWLGYLNSCINPIIYPCS). Over 330–466 (SQEFKKAFQN…ISLSENGEEV (137 aa)) the chain is Cytoplasmic. Residues 334–349 (KKAFQNVLRIQCLCRK) carry the Nuclear localization signal motif. Cysteine 345 carries S-palmitoyl cysteine lipidation.

This sequence belongs to the G-protein coupled receptor 1 family. Adrenergic receptor subfamily. ADRA1A sub-subfamily. Homo- and heterooligomer. Heterooligomerizes with ADRA1B homooligomers in cardiac myocytes. Interacts with CAVIN4. Post-translationally, C-terminal Ser or Thr residues may be phosphorylated. In terms of tissue distribution, expressed in heart, brain, liver and prostate, but not in kidney, lung, adrenal, aorta and pituitary. Within the prostate, expressed in the apex, base, periurethral and lateral lobe. Isoform 4 is the most abundant isoform expressed in the prostate with high levels also detected in liver and heart.

It localises to the nucleus membrane. It is found in the cell membrane. The protein resides in the cytoplasm. Its subcellular location is the membrane. The protein localises to the caveola. This alpha-adrenergic receptor mediates its action by association with G proteins that activate a phosphatidylinositol-calcium second messenger system. Its effect is mediated by G(q) and G(11) proteins. Nuclear ADRA1A-ADRA1B heterooligomers regulate phenylephrine(PE)-stimulated ERK signaling in cardiac myocytes. The polypeptide is Alpha-1A adrenergic receptor (ADRA1A) (Homo sapiens (Human)).